The following is a 303-amino-acid chain: N-acetyl-D-glucosamine kinase (303 aa).

Residues 4–11 and 133–140 contribute to the ATP site; these read GFDIGGTK and GVGGGLIF. Positions 157, 177, 179, and 184 each coordinate Zn(2+).

The protein belongs to the ROK (NagC/XylR) family. NagK subfamily.

The catalysed reaction is N-acetyl-D-glucosamine + ATP = N-acetyl-D-glucosamine 6-phosphate + ADP + H(+). It functions in the pathway cell wall biogenesis; peptidoglycan recycling. Its function is as follows. Catalyzes the phosphorylation of N-acetyl-D-glucosamine (GlcNAc) derived from cell-wall degradation, yielding GlcNAc-6-P. This Escherichia coli O139:H28 (strain E24377A / ETEC) protein is N-acetyl-D-glucosamine kinase.